Reading from the N-terminus, the 491-residue chain is Ubiquitin carboxyl-terminal hydrolase 30 (491 aa).

Over 1–31 (MPWCKQGTTDKLVREFLRTGAAARNKMMKNW) the chain is Mitochondrial intermembrane. The helical transmembrane segment at 32–52 (GVIGGIAAAMAAGVYVLWGPI) threads the bilayer. At 53–491 (SDRRKKRKGM…MQRPGLRVEE (439 aa)) the chain is on the cytoplasmic side. The USP domain occupies 64–482 (PGLLNLGNTC…SAYLLFYERM (419 aa)). Cysteine 73 functions as the Nucleophile in the catalytic mechanism. The span at 346 to 355 (AQSQQKTSRT) shows a compositional bias: polar residues. The disordered stretch occupies residues 346 to 365 (AQSQQKTSRTNKAKASADPK). Histidine 432 acts as the Proton acceptor in catalysis.

Belongs to the peptidase C19 family.

It localises to the mitochondrion outer membrane. It catalyses the reaction Thiol-dependent hydrolysis of ester, thioester, amide, peptide and isopeptide bonds formed by the C-terminal Gly of ubiquitin (a 76-residue protein attached to proteins as an intracellular targeting signal).. Its function is as follows. Deubiquitinating enzyme that acts as a key inhibitor of mitophagy by counteracting the action of parkin (PRKN). This chain is Ubiquitin carboxyl-terminal hydrolase 30 (usp30), found in Danio rerio (Zebrafish).